Reading from the N-terminus, the 265-residue chain is Eukaryotic translation initiation factor 3 subunit J (265 aa).

The interval 1 to 71 (MSWDDEAING…KESSADRALL (71 aa)) is disordered. Residues 23 to 32 (WDAEIGDDEP) are compositionally biased toward acidic residues. A compositionally biased stretch (basic and acidic residues) spans 42 to 71 (EEKKPAPKPKKEQPKKVKKGKESSADRALL). Serine 65 is modified (phosphoserine). Residue threonine 75 is modified to Phosphothreonine. Serine 92 is subject to Phosphoserine. Residues 219–265 (VRGGTATGGAGKKKVKGKTNLGGAFKKDQDFDLDGPDDFEFGDDDFM) form a disordered region. Arginine 220 carries the omega-N-methylarginine modification. Acidic residues predominate over residues 249-265 (FDLDGPDDFEFGDDDFM).

Belongs to the eIF-3 subunit J family. As to quaternary structure, probable component of the eukaryotic translation initiation factor 3 (eIF-3) complex. Is not part of the eIF-3 core complex, with which it is associated in substochiometric amounts.

Its subcellular location is the cytoplasm. Its function is as follows. Component of the eukaryotic translation initiation factor 3 (eIF-3) complex, which is involved in protein synthesis of a specialized repertoire of mRNAs and, together with other initiation factors, stimulates binding of mRNA and methionyl-tRNAi to the 40S ribosome. The eIF-3 complex specifically targets and initiates translation of a subset of mRNAs involved in cell proliferation. This Saccharomyces cerevisiae (strain ATCC 204508 / S288c) (Baker's yeast) protein is Eukaryotic translation initiation factor 3 subunit J.